The following is a 65-amino-acid chain: Large ribosomal subunit protein uL29 (65 aa).

The protein belongs to the universal ribosomal protein uL29 family.

This Acidovorax ebreus (strain TPSY) (Diaphorobacter sp. (strain TPSY)) protein is Large ribosomal subunit protein uL29.